Here is a 512-residue protein sequence, read N- to C-terminus: NAD(P)H-quinone oxidoreductase subunit 2, organellar chromatophore (512 aa).

14 helical membrane-spanning segments follow: residues 6-26 (LLAL…LLAL), 43-63 (WVPP…ASQW), 80-100 (LAIA…MISW), 107-127 (GAPM…AMFL), 133-153 (LVSI…LAGY), 168-188 (LLVG…LYGL), 210-230 (AALA…AVPF), 242-262 (PTPI…ALAL), 276-296 (WKFL…IVAL), 304-324 (MLAY…VCGT), 332-352 (ILYL…VILF), 376-396 (IGLS…GFFG), 411-431 (LLVV…ISVI), and 464-484 (VALL…NPLF).

Belongs to the complex I subunit 2 family. In terms of assembly, NDH-1 can be composed of about 15 different subunits; different subcomplexes with different compositions have been identified which probably have different functions.

It localises to the plastid. The protein localises to the organellar chromatophore thylakoid membrane. The enzyme catalyses a plastoquinone + NADH + (n+1) H(+)(in) = a plastoquinol + NAD(+) + n H(+)(out). It carries out the reaction a plastoquinone + NADPH + (n+1) H(+)(in) = a plastoquinol + NADP(+) + n H(+)(out). Functionally, NDH-1 shuttles electrons from an unknown electron donor, via FMN and iron-sulfur (Fe-S) centers, to quinones in the respiratory and/or the photosynthetic chain. The immediate electron acceptor for the enzyme in this species is believed to be plastoquinone. Couples the redox reaction to proton translocation, and thus conserves the redox energy in a proton gradient. Cyanobacterial NDH-1 also plays a role in inorganic carbon-concentration. This Paulinella chromatophora protein is NAD(P)H-quinone oxidoreductase subunit 2, organellar chromatophore.